The primary structure comprises 288 residues: 33 kDa chaperonin (288 aa).

2 disulfides stabilise this stretch: Cys233/Cys235 and Cys267/Cys270.

The protein belongs to the HSP33 family. In terms of processing, under oxidizing conditions two disulfide bonds are formed involving the reactive cysteines. Under reducing conditions zinc is bound to the reactive cysteines and the protein is inactive.

It localises to the cytoplasm. Its function is as follows. Redox regulated molecular chaperone. Protects both thermally unfolding and oxidatively damaged proteins from irreversible aggregation. Plays an important role in the bacterial defense system toward oxidative stress. The protein is 33 kDa chaperonin of Pasteurella multocida (strain Pm70).